We begin with the raw amino-acid sequence, 348 residues long: Phenylalanine--tRNA ligase alpha subunit (348 aa).

Glutamate 259 contributes to the Mg(2+) binding site.

This sequence belongs to the class-II aminoacyl-tRNA synthetase family. Phe-tRNA synthetase alpha subunit type 1 subfamily. Tetramer of two alpha and two beta subunits. The cofactor is Mg(2+).

It is found in the cytoplasm. The enzyme catalyses tRNA(Phe) + L-phenylalanine + ATP = L-phenylalanyl-tRNA(Phe) + AMP + diphosphate + H(+). This Enterococcus faecalis (strain ATCC 700802 / V583) protein is Phenylalanine--tRNA ligase alpha subunit.